The following is a 368-amino-acid chain: DNA replication and repair protein RecF (368 aa).

Gly30–Thr37 is a binding site for ATP.

This sequence belongs to the RecF family.

It is found in the cytoplasm. Functionally, the RecF protein is involved in DNA metabolism; it is required for DNA replication and normal SOS inducibility. RecF binds preferentially to single-stranded, linear DNA. It also seems to bind ATP. This chain is DNA replication and repair protein RecF, found in Streptococcus pyogenes serotype M12 (strain MGAS2096).